We begin with the raw amino-acid sequence, 528 residues long: tRNA-2-methylthio-N(6)-dimethylallyladenosine synthase (528 aa).

The MTTase N-terminal domain occupies 19 to 134 (RTYEVRTYGC…LPTLLERARH (116 aa)). Residues Cys-28, Cys-63, Cys-97, Cys-171, Cys-175, and Cys-178 each coordinate [4Fe-4S] cluster. In terms of domain architecture, Radical SAM core spans 157–387 (RDEIASGWVS…TALQERISHE (231 aa)). One can recognise a TRAM domain in the interval 390-460 (QRVVGRTVEV…PFHLIADSVD (71 aa)).

It belongs to the methylthiotransferase family. MiaB subfamily. Monomer. [4Fe-4S] cluster is required as a cofactor.

The protein resides in the cytoplasm. It catalyses the reaction N(6)-dimethylallyladenosine(37) in tRNA + (sulfur carrier)-SH + AH2 + 2 S-adenosyl-L-methionine = 2-methylsulfanyl-N(6)-dimethylallyladenosine(37) in tRNA + (sulfur carrier)-H + 5'-deoxyadenosine + L-methionine + A + S-adenosyl-L-homocysteine + 2 H(+). Functionally, catalyzes the methylthiolation of N6-(dimethylallyl)adenosine (i(6)A), leading to the formation of 2-methylthio-N6-(dimethylallyl)adenosine (ms(2)i(6)A) at position 37 in tRNAs that read codons beginning with uridine. The protein is tRNA-2-methylthio-N(6)-dimethylallyladenosine synthase of Clavibacter michiganensis subsp. michiganensis (strain NCPPB 382).